A 338-amino-acid polypeptide reads, in one-letter code: tRNA-specific 2-thiouridylase MnmA (338 aa).

ATP is bound by residues 6–13 and Met32; that span reads AMSGGVDS. The active-site Nucleophile is the Cys92. Cysteines 92 and 186 form a disulfide. Gly116 provides a ligand contact to ATP. Positions 134–136 are interaction with tRNA; the sequence is KDQ. Cys186 serves as the catalytic Cysteine persulfide intermediate. Residues 288 to 289 form an interaction with tRNA region; that stretch reads RY.

Belongs to the MnmA/TRMU family.

It is found in the cytoplasm. It carries out the reaction S-sulfanyl-L-cysteinyl-[protein] + uridine(34) in tRNA + AH2 + ATP = 2-thiouridine(34) in tRNA + L-cysteinyl-[protein] + A + AMP + diphosphate + H(+). Functionally, catalyzes the 2-thiolation of uridine at the wobble position (U34) of tRNA, leading to the formation of s(2)U34. The polypeptide is tRNA-specific 2-thiouridylase MnmA (Campylobacter jejuni subsp. jejuni serotype O:6 (strain 81116 / NCTC 11828)).